Here is a 431-residue protein sequence, read N- to C-terminus: tRNA(Ile)-lysidine synthase (431 aa).

26 to 31 (SGGIDS) is a binding site for ATP.

Belongs to the tRNA(Ile)-lysidine synthase family.

It localises to the cytoplasm. The enzyme catalyses cytidine(34) in tRNA(Ile2) + L-lysine + ATP = lysidine(34) in tRNA(Ile2) + AMP + diphosphate + H(+). In terms of biological role, ligates lysine onto the cytidine present at position 34 of the AUA codon-specific tRNA(Ile) that contains the anticodon CAU, in an ATP-dependent manner. Cytidine is converted to lysidine, thus changing the amino acid specificity of the tRNA from methionine to isoleucine. The protein is tRNA(Ile)-lysidine synthase of Wolbachia sp. subsp. Brugia malayi (strain TRS).